Here is a 124-residue protein sequence, read N- to C-terminus: Small ribosomal subunit protein uS12 (124 aa).

The tract at residues 8 to 30 is disordered; the sequence is IRSARQDTEKQTKSPALKSCPQR. A 3-methylthioaspartic acid modification is found at Asp-89. Residues 103-124 form a disordered region; sequence DTAGVKDRKQSRSKYGAKKPKA. Basic residues predominate over residues 113-124; the sequence is SRSKYGAKKPKA.

Belongs to the universal ribosomal protein uS12 family. In terms of assembly, part of the 30S ribosomal subunit. Contacts proteins S8 and S17. May interact with IF1 in the 30S initiation complex.

Its function is as follows. With S4 and S5 plays an important role in translational accuracy. Functionally, interacts with and stabilizes bases of the 16S rRNA that are involved in tRNA selection in the A site and with the mRNA backbone. Located at the interface of the 30S and 50S subunits, it traverses the body of the 30S subunit contacting proteins on the other side and probably holding the rRNA structure together. The combined cluster of proteins S8, S12 and S17 appears to hold together the shoulder and platform of the 30S subunit. The polypeptide is Small ribosomal subunit protein uS12 (Trichodesmium erythraeum (strain IMS101)).